We begin with the raw amino-acid sequence, 324 residues long: Testisin (324 aa).

The first 21 residues, 1-21 (MGARGKTLVPLLVVVATAAMA), serve as a signal peptide directing secretion. Positions 22-54 (LQSTYLQVDPEKPELQEPDLLSGPCGHRTIPSR) are excised as a propeptide. Intrachain disulfides connect cysteine 46-cysteine 167 and cysteine 80-cysteine 96. One can recognise a Peptidase S1 domain in the interval 55–296 (IVGGDDAELG…HYNWIQSTMI (242 aa)). Active-site charge relay system residues include histidine 95 and aspartate 147. Residues asparagine 170, asparagine 177, and asparagine 210 are each glycosylated (N-linked (GlcNAc...) asparagine). 3 cysteine pairs are disulfide-bonded: cysteine 181-cysteine 254, cysteine 214-cysteine 233, and cysteine 244-cysteine 272. The active-site Charge relay system is the serine 248. N-linked (GlcNAc...) asparagine glycosylation is present at asparagine 283. Asparagine 298 carries the GPI-anchor amidated asparagine lipid modification. Positions 299–324 (GLLRPDPVPLLLFLTLAWASSLLRPA) are cleaved as a propeptide — removed in mature form.

The protein belongs to the peptidase S1 family. As to expression, testis.

It is found in the cell membrane. Its function is as follows. Could regulate proteolytic events associated with testicular germ cell maturation. In Mus musculus (Mouse), this protein is Testisin (Prss21).